An 89-amino-acid chain; its full sequence is uncharacterized protein (89 aa).

The next 2 membrane-spanning stretches (helical) occupy residues 1-21 (MFLALTSIAIPAAIVIPISLI) and 28-48 (GISLTFSMTIGFVGLILTIAA).

The protein localises to the cell membrane. This is an uncharacterized protein from Methanocaldococcus jannaschii (strain ATCC 43067 / DSM 2661 / JAL-1 / JCM 10045 / NBRC 100440) (Methanococcus jannaschii).